The primary structure comprises 414 residues: Esterase FrsA (414 aa).

Belongs to the FrsA family.

It catalyses the reaction a carboxylic ester + H2O = an alcohol + a carboxylate + H(+). Catalyzes the hydrolysis of esters. The polypeptide is Esterase FrsA (Escherichia coli O6:K15:H31 (strain 536 / UPEC)).